The chain runs to 109 residues: MFSKEGMGDLMKKAQEMQENMKKAQAEIANTEVTGESGAGLVKITILGNHNVRKVEIDPSLMEDDKEMLEDLIAAAMNDAVHRIGEVNKNKMSGVSGGMELPPGFKMPF.

The protein belongs to the YbaB/EbfC family. Homodimer.

The protein resides in the cytoplasm. It is found in the nucleoid. Functionally, binds to DNA and alters its conformation. May be involved in regulation of gene expression, nucleoid organization and DNA protection. This Psychromonas ingrahamii (strain DSM 17664 / CCUG 51855 / 37) protein is Nucleoid-associated protein Ping_2276.